The primary structure comprises 283 residues: Pantothenate synthetase (283 aa).

30-37 contributes to the ATP binding site; sequence MGNLHLGH. The active-site Proton donor is the histidine 37. Residue glutamine 61 coordinates (R)-pantoate. A beta-alanine-binding site is contributed by glutamine 61. Residue 149-152 participates in ATP binding; sequence GQKD. Glutamine 155 is a (R)-pantoate binding site. Residues isoleucine 178 and 186–189 each bind ATP; that span reads MSSR.

It belongs to the pantothenate synthetase family. As to quaternary structure, homodimer.

The protein localises to the cytoplasm. The enzyme catalyses (R)-pantoate + beta-alanine + ATP = (R)-pantothenate + AMP + diphosphate + H(+). Its pathway is cofactor biosynthesis; (R)-pantothenate biosynthesis; (R)-pantothenate from (R)-pantoate and beta-alanine: step 1/1. Its function is as follows. Catalyzes the condensation of pantoate with beta-alanine in an ATP-dependent reaction via a pantoyl-adenylate intermediate. The polypeptide is Pantothenate synthetase (Shewanella pealeana (strain ATCC 700345 / ANG-SQ1)).